Here is a 75-residue protein sequence, read N- to C-terminus: Notewaprin-b (75 aa).

Residues M1–S24 form the signal peptide. Residues R27–I72 form the WAP domain. 4 disulfides stabilise this stretch: C34–C60, C43–C64, C47–C59, and C53–C68.

The protein belongs to the venom waprin family. Expressed by the venom gland.

It is found in the secreted. In terms of biological role, damages membranes of susceptible bacteria. Has no hemolytic activity. Not toxic to mice. Does not inhibit the proteinases elastase and cathepsin G. The chain is Notewaprin-b from Notechis scutatus scutatus (Mainland tiger snake).